We begin with the raw amino-acid sequence, 720 residues long: Inactive serine protease PAMR1 (720 aa).

The first 21 residues, 1-21 (MELGWWPQLGLAFLQLLLISS), serve as a signal peptide directing secretion. Disulfide bonds link Cys-128-Cys-150, Cys-177-Cys-199, Cys-239-Cys-250, Cys-244-Cys-260, Cys-262-Cys-271, Cys-280-Cys-329, Cys-315-Cys-342, and Cys-414-Cys-442. A CUB domain is found at 128–236 (CGQVLRVPKG…DGFHAIFEEI (109 aa)). One can recognise an EGF-like domain in the interval 235-272 (EITACSSSPCFHDGTCLLDSTGSYKCACLAGYTGKHCE). Sushi domains follow at residues 278 to 344 (RNCS…ICIK) and 387 to 444 (APTK…SCIP). Residues 445–720 (ICGKTENVSA…FKDWIERNMK (276 aa)) enclose the Peptidase S1 domain. N-linked (GlcNAc...) asparagine glycosylation occurs at Asn-451. Disulfide bonds link Cys-489-Cys-505, Cys-630-Cys-649, and Cys-661-Cys-697.

It belongs to the peptidase S1 family.

Its subcellular location is the secreted. In terms of biological role, may play a role in regeneration of skeletal muscle. This Bos taurus (Bovine) protein is Inactive serine protease PAMR1 (PAMR1).